Reading from the N-terminus, the 366-residue chain is Galactoside alpha-(1,2)-fucosyltransferase 1 (366 aa).

At 1-8 the chain is on the cytoplasmic side; the sequence is MWPPSHRQ. A helical; Signal-anchor for type II membrane protein membrane pass occupies residues 9 to 25; that stretch reads LCLAFLLVCVLSVISFF. At 26-366 the chain is on the lumenal side; that stretch reads LHIHQDSFPH…LSSLWTLAKP (341 aa). N-linked (GlcNAc...) asparagine glycosylation is found at asparagine 66, asparagine 302, and asparagine 328.

It belongs to the glycosyltransferase 11 family.

It localises to the golgi apparatus. It is found in the golgi stack membrane. It catalyses the reaction a beta-D-galactosyl-(1-&gt;4)-N-acetyl-beta-D-glucosaminyl derivative + GDP-beta-L-fucose = an alpha-L-Fuc-(1-&gt;2)-beta-D-Gal-(1-&gt;4)-beta-D-GlcNAc derivative + GDP + H(+). The enzyme catalyses a ganglioside GA1 + GDP-beta-L-fucose = a ganglioside Fuc-GA1 + GDP + H(+). It carries out the reaction a beta-D-Gal-(1-&gt;3)-beta-D-GlcNAc-(1-&gt;3)-beta-D-Gal-(1-&gt;4)-beta-D-Glc-(1&lt;-&gt;1')-Cer(d18:1(4E)) + GDP-beta-L-fucose = alpha-L-fucosyl-(1-&gt;2)- beta-D-galactosyl-(1-&gt;3)-N-acetyl-beta-D-glucosaminyl-(1-&gt;3)-beta-D-galactosyl-(1-&gt;4)-beta-D-glucosyl-(1&lt;-&gt;1')-N-acylsphing-4-enine + GDP + H(+). The catalysed reaction is a neolactoside nLc4Cer(d18:1(4E)) + GDP-beta-L-fucose = a neolactoside IV(2)-alpha-Fuc-nLc4Cer(d18:1(4E)) + GDP + H(+). It catalyses the reaction a ganglioside GM1 + GDP-beta-L-fucose = a ganglioside Fuc-GM1 + GDP + H(+). The enzyme catalyses beta-D-galactosyl-(1-&gt;3)-N-acetyl-D-galactosamine + GDP-beta-L-fucose = alpha-L-fucosyl-(1-&gt;2)-beta-D-galactosyl-(1-&gt;3)-N-acetyl-D-galactosamine + GDP + H(+). It participates in protein modification; protein glycosylation. Functionally, catalyzes the transfer of L-fucose, from a guanosine diphosphate-beta-L-fucose, to the terminal galactose residue of glycoconjugates through an alpha(1,2) linkage leading to H antigen synthesis that is an intermediate substrate in the synthesis of ABO blood group antigens. H antigen is essential for maturation of the glomerular layer of the main olfactory bulb, in cell migration and early cell-cell contacts during tumor associated angiogenesis. Preferentially fucosylates soluble lactose and to a lesser extent fucosylates glycolipids gangliosides GA1 and GM1a. This Pan troglodytes (Chimpanzee) protein is Galactoside alpha-(1,2)-fucosyltransferase 1.